We begin with the raw amino-acid sequence, 103 residues long: Small ribosomal subunit protein uS10 (103 aa).

The protein belongs to the universal ribosomal protein uS10 family. Part of the 30S ribosomal subunit.

Its function is as follows. Involved in the binding of tRNA to the ribosomes. The sequence is that of Small ribosomal subunit protein uS10 from Burkholderia mallei (strain NCTC 10247).